We begin with the raw amino-acid sequence, 279 residues long: Rhamnulose-1-phosphate aldolase (279 aa).

Residue E115 is part of the active site. Zn(2+) is bound by residues H138, H140, and H209.

This sequence belongs to the aldolase class II family. RhaD subfamily. It depends on Zn(2+) as a cofactor.

Its subcellular location is the cytoplasm. The enzyme catalyses L-rhamnulose 1-phosphate = (S)-lactaldehyde + dihydroxyacetone phosphate. It participates in carbohydrate degradation; L-rhamnose degradation; glycerone phosphate from L-rhamnose: step 3/3. In terms of biological role, catalyzes the reversible cleavage of L-rhamnulose-1-phosphate to dihydroxyacetone phosphate (DHAP) and L-lactaldehyde. The protein is Rhamnulose-1-phosphate aldolase of Enterococcus faecalis (strain ATCC 700802 / V583).